A 524-amino-acid chain; its full sequence is Cytochrome P450 1A1 (524 aa).

The mitochondrial targeting signal stretch occupies residues 33 to 44; it reads TRTWVPKGLKSP. S71 carries O-linked (GlcNAc) serine glycosylation. F228 is a binding site for substrate. Position 461 (C461) interacts with heme.

The protein belongs to the cytochrome P450 family. As to quaternary structure, both Cytochrome P450MT2A and Cytochrome P450MT2B interact with cytosolic chaperones HSP70 and HSP90; this interaction is required for initial targeting to mitochondria. P450MT2B interacts (via mitochondrial targeting signal) with TOMM40 (via N-terminus); this interaction is required for translocation across the mitochondrial outer membrane. Heme is required as a cofactor. Two forms; MT2A (long form) and MT2B (short form); are produced by NH2-terminal proteolytic cleavage. This cleavage activates a cryptic mitochondrial targeting signal. Liver.

The protein resides in the cytoplasm. Its subcellular location is the endoplasmic reticulum membrane. It localises to the mitochondrion inner membrane. The protein localises to the microsome membrane. The catalysed reaction is an organic molecule + reduced [NADPH--hemoprotein reductase] + O2 = an alcohol + oxidized [NADPH--hemoprotein reductase] + H2O + H(+). The enzyme catalyses estrone + reduced [NADPH--hemoprotein reductase] + O2 = 2-hydroxyestrone + oxidized [NADPH--hemoprotein reductase] + H2O + H(+). It carries out the reaction estrone + reduced [NADPH--hemoprotein reductase] + O2 = 4-hydroxyestrone + oxidized [NADPH--hemoprotein reductase] + H2O + H(+). It catalyses the reaction estrone + reduced [NADPH--hemoprotein reductase] + O2 = 6alpha-hydroxyestrone + oxidized [NADPH--hemoprotein reductase] + H2O + H(+). The catalysed reaction is estrone + reduced [NADPH--hemoprotein reductase] + O2 = 15alpha-hydroxyestrone + oxidized [NADPH--hemoprotein reductase] + H2O + H(+). The enzyme catalyses estrone + reduced [NADPH--hemoprotein reductase] + O2 = 16alpha-hydroxyestrone + oxidized [NADPH--hemoprotein reductase] + H2O + H(+). It carries out the reaction 17beta-estradiol + reduced [NADPH--hemoprotein reductase] + O2 = 2-hydroxy-17beta-estradiol + oxidized [NADPH--hemoprotein reductase] + H2O + H(+). It catalyses the reaction 17beta-estradiol + reduced [NADPH--hemoprotein reductase] + O2 = 4-hydroxy-17beta-estradiol + oxidized [NADPH--hemoprotein reductase] + H2O + H(+). The catalysed reaction is 17beta-estradiol + reduced [NADPH--hemoprotein reductase] + O2 = 6alpha-hydroxy-17beta-estradiol + oxidized [NADPH--hemoprotein reductase] + H2O + H(+). The enzyme catalyses 17beta-estradiol + reduced [NADPH--hemoprotein reductase] + O2 = 7alpha-hydroxy-17beta-estradiol + oxidized [NADPH--hemoprotein reductase] + H2O + H(+). It carries out the reaction 17beta-estradiol + reduced [NADPH--hemoprotein reductase] + O2 = 15alpha-hydroxy-17beta-estradiol + oxidized [NADPH--hemoprotein reductase] + H2O + H(+). It catalyses the reaction (5Z,8Z,11Z)-eicosatrienoate + reduced [NADPH--hemoprotein reductase] + O2 = 19-hydroxy-(5Z,8Z,11Z)-eicosatrienoate + oxidized [NADPH--hemoprotein reductase] + H2O + H(+). The catalysed reaction is (5Z,8Z,11Z,14Z)-eicosatetraenoate + reduced [NADPH--hemoprotein reductase] + O2 = 16-hydroxy-(5Z,8Z,11Z,14Z)-eicosatetraenoate + oxidized [NADPH--hemoprotein reductase] + H2O + H(+). The enzyme catalyses (5Z,8Z,11Z,14Z)-eicosatetraenoate + reduced [NADPH--hemoprotein reductase] + O2 = 17-hydroxy-(5Z,8Z,11Z,14Z)-eicosatetraenoate + oxidized [NADPH--hemoprotein reductase] + H2O + H(+). It carries out the reaction (5Z,8Z,11Z,14Z)-eicosatetraenoate + reduced [NADPH--hemoprotein reductase] + O2 = 18-hydroxy-(5Z,8Z,11Z,14Z)-eicosatetraenoate + oxidized [NADPH--hemoprotein reductase] + H2O + H(+). It catalyses the reaction (5Z,8Z,11Z,14Z)-eicosatetraenoate + reduced [NADPH--hemoprotein reductase] + O2 = 19-hydroxy-(5Z,8Z,11Z,14Z)-eicosatetraenoate + oxidized [NADPH--hemoprotein reductase] + H2O + H(+). The catalysed reaction is (5Z,8Z,11Z,14Z,17Z)-eicosapentaenoate + reduced [NADPH--hemoprotein reductase] + O2 = 19-hydroxy-(5Z,8Z,11Z,14Z,17Z)-eicosapentaenoate + oxidized [NADPH--hemoprotein reductase] + H2O + H(+). The enzyme catalyses (5Z,8Z,11Z,14Z)-eicosatetraenoate + reduced [NADPH--hemoprotein reductase] + O2 = (8R,9S)-epoxy-(5Z,11Z,14Z)-eicosatrienoate + oxidized [NADPH--hemoprotein reductase] + H2O + H(+). It carries out the reaction (5Z,8Z,11Z,14Z)-eicosatetraenoate + reduced [NADPH--hemoprotein reductase] + O2 = (11R,12S)-epoxy-(5Z,8Z,14Z)-eicosatrienoate + oxidized [NADPH--hemoprotein reductase] + H2O + H(+). It catalyses the reaction (5Z,8Z,11Z,14Z)-eicosatetraenoate + reduced [NADPH--hemoprotein reductase] + O2 = (11S,12R)-epoxy-(5Z,8Z,14Z)-eicosatrienoate + oxidized [NADPH--hemoprotein reductase] + H2O + H(+). The catalysed reaction is (5Z,8Z,11Z,14Z)-eicosatetraenoate + reduced [NADPH--hemoprotein reductase] + O2 = (14R,15S)-epoxy-(5Z,8Z,11Z)-eicosatrienoate + oxidized [NADPH--hemoprotein reductase] + H2O + H(+). The enzyme catalyses (5Z,8Z,11Z,14Z,17Z)-eicosapentaenoate + reduced [NADPH--hemoprotein reductase] + O2 = (17R,18S)-epoxy-(5Z,8Z,11Z,14Z)-eicosatetraenoate + oxidized [NADPH--hemoprotein reductase] + H2O + H(+). It carries out the reaction (4Z,7Z,10Z,13Z,16Z,19Z)-docosahexaenoate + reduced [NADPH--hemoprotein reductase] + O2 = (19S,20R)-epoxy-(4Z,7Z,10Z,13Z,16Z)-docosapentaenoate + oxidized [NADPH--hemoprotein reductase] + H2O + H(+). It catalyses the reaction (4Z,7Z,10Z,13Z,16Z,19Z)-docosahexaenoate + reduced [NADPH--hemoprotein reductase] + O2 = (19R,20S)-epoxy-(4Z,7Z,10Z,13Z,16Z)-docosapentaenoate + oxidized [NADPH--hemoprotein reductase] + H2O + H(+). The catalysed reaction is all-trans-retinol + reduced [NADPH--hemoprotein reductase] + O2 = all-trans-retinal + oxidized [NADPH--hemoprotein reductase] + 2 H2O + H(+). The enzyme catalyses all-trans-retinal + reduced [NADPH--hemoprotein reductase] + O2 = all-trans-retinoate + oxidized [NADPH--hemoprotein reductase] + H2O + 2 H(+). It carries out the reaction (13S)-hydroperoxy-(9Z,11E)-octadecadienoate = 13-oxo-(9Z,11E)-octadecadienoate + H2O. It catalyses the reaction (12S)-hydroperoxy-(5Z,8Z,10E,14Z)-eicosatetraenoate = 12-oxo-(5Z,8Z,10E,14Z)-eicosatetraenoate + H2O. The catalysed reaction is (15S)-hydroperoxy-(5Z,8Z,11Z,13E)-eicosatetraenoate = 15-oxo-(5Z,8Z,11Z,13E)-eicosatetraenoate + H2O. The enzyme catalyses (5S)-hydroperoxy-(6E,8Z,11Z,14Z)-eicosatetraenoate = 5-oxo-(6E,8Z,11Z,14Z)-eicosatetraenoate + H2O. It participates in steroid hormone biosynthesis. Its pathway is lipid metabolism; fatty acid metabolism. The protein operates within cofactor metabolism; retinol metabolism. In terms of biological role, a cytochrome P450 monooxygenase involved in the metabolism of various endogenous substrates, including fatty acids, steroid hormones and vitamins. Mechanistically, uses molecular oxygen inserting one oxygen atom into a substrate, and reducing the second into a water molecule, with two electrons provided by NADPH via cytochrome P450 reductase (CPR; NADPH-ferrihemoprotein reductase). Catalyzes the hydroxylation of carbon-hydrogen bonds. Exhibits high catalytic activity for the formation of hydroxyestrogens from estrone (E1) and 17beta-estradiol (E2), namely 2-hydroxy E1 and E2, as well as D-ring hydroxylated E1 and E2 at the C15alpha and C16alpha positions. Displays different regioselectivities for polyunsaturated fatty acids (PUFA) hydroxylation. Catalyzes the epoxidation of double bonds of certain PUFA. Converts arachidonic acid toward epoxyeicosatrienoic acid (EET) regioisomers, 8,9-, 11,12-, and 14,15-EET, that function as lipid mediators in the vascular system. Displays an absolute stereoselectivity in the epoxidation of eicosapentaenoic acid (EPA) producing the 17(R),18(S) enantiomer. May play an important role in all-trans retinoic acid biosynthesis in extrahepatic tissues. Catalyzes two successive oxidative transformation of all-trans retinol to all-trans retinal and then to the active form all-trans retinoic acid. May also participate in eicosanoids metabolism by converting hydroperoxide species into oxo metabolites (lipoxygenase-like reaction, NADPH-independent). The protein is Cytochrome P450 1A1 of Rattus norvegicus (Rat).